Consider the following 389-residue polypeptide: PqqA peptide cyclase (389 aa).

In terms of domain architecture, Radical SAM core spans 19–234 (VGLPLWLLAE…TNEYRARLEA (216 aa)). Residues Cys-33, Cys-37, and Cys-40 each contribute to the [4Fe-4S] cluster site.

It belongs to the radical SAM superfamily. PqqE family. Interacts with PqqD. The interaction is necessary for activity of PqqE. It depends on [4Fe-4S] cluster as a cofactor.

It carries out the reaction [PQQ precursor protein] + S-adenosyl-L-methionine = E-Y cross-linked-[PQQ precursor protein] + 5'-deoxyadenosine + L-methionine + H(+). Its pathway is cofactor biosynthesis; pyrroloquinoline quinone biosynthesis. In terms of biological role, catalyzes the cross-linking of a glutamate residue and a tyrosine residue in the PqqA protein as part of the biosynthesis of pyrroloquinoline quinone (PQQ). The chain is PqqA peptide cyclase from Pseudomonas syringae pv. syringae (strain B728a).